We begin with the raw amino-acid sequence, 90 residues long: MALDSAKKAEIVAKFARKSGDTGSPEVQVALLTTRISELTGHLKINKKDFSSRLGLLKLVGRRKRLLKYLKAKNYESYTKLIAELGIRDK.

It belongs to the universal ribosomal protein uS15 family. As to quaternary structure, part of the 30S ribosomal subunit. Forms a bridge to the 50S subunit in the 70S ribosome, contacting the 23S rRNA.

Functionally, one of the primary rRNA binding proteins, it binds directly to 16S rRNA where it helps nucleate assembly of the platform of the 30S subunit by binding and bridging several RNA helices of the 16S rRNA. In terms of biological role, forms an intersubunit bridge (bridge B4) with the 23S rRNA of the 50S subunit in the ribosome. The sequence is that of Small ribosomal subunit protein uS15 from Campylobacter fetus subsp. fetus (strain 82-40).